The primary structure comprises 274 residues: tRNA uridine(34) hydroxylase (274 aa).

The Rhodanese domain occupies 121–217; the sequence is SRSDVYTIDT…YFKSTKNTNN (97 aa). Cysteine 177 (cysteine persulfide intermediate) is an active-site residue.

The protein belongs to the TrhO family.

The catalysed reaction is uridine(34) in tRNA + AH2 + O2 = 5-hydroxyuridine(34) in tRNA + A + H2O. Its function is as follows. Catalyzes oxygen-dependent 5-hydroxyuridine (ho5U) modification at position 34 in tRNAs. In Ehrlichia canis (strain Jake), this protein is tRNA uridine(34) hydroxylase.